Consider the following 2453-residue polypeptide: Tyrosine-protein phosphatase non-receptor type 13 (2453 aa).

Positions 3 to 190 constitute a KIND domain; it reads VSLAEALEVR…SGTDPLSRSS (188 aa). The interval 183–227 is disordered; sequence TDPLSRSSEQKPDRSQAIRDRLRGKGLPTGRSSTSDALDTHEAPL. Positions 190–205 are enriched in basic and acidic residues; it reads SEQKPDRSQAIRDRLR. The residue at position 240 (serine 240) is a Phosphoserine. Residues 253–285 are disordered; the sequence is EDYLKDTPSDNNSRHEDSETFSSPYQFKTSTPQ. The segment covering 256–270 has biased composition (basic and acidic residues); sequence LKDTPSDNNSRHEDS. Over residues 272–285 the composition is skewed to polar residues; sequence TFSSPYQFKTSTPQ. Serine 297 and serine 298 each carry phosphoserine. Residues 429–457 form a disordered region; sequence SEASKRFESSSGLPGVDETGQTRPSRQYE. Polar residues predominate over residues 447–457; the sequence is TGQTRPSRQYE. The stretch at 458–493 forms a coiled coil; sequence TSLEGNLINQDIMLRRQEEEMMQLQARMALRQSRLS. The 301-residue stretch at 565 to 865 folds into the FERM domain; sequence RKVNIRLLSG…SQHKFQLQMR (301 aa). Phosphoserine occurs at positions 883, 890, 901, 904, and 907. Basic and acidic residues predominate over residues 944–957; that stretch reads KEKTDKASWEEKPR. Disordered stretches follow at residues 944-966 and 1007-1063; these read KEKT…YHDL and LAGL…VPFK. Residues serine 1021 and serine 1025 each carry the phosphoserine modification. Positions 1025 to 1034 are enriched in basic and acidic residues; that stretch reads SPERRNHESD. Positions 1049–1058 are enriched in low complexity; sequence SLPSSGKSSS. Serine 1076 is modified (phosphoserine). Residues 1084–1170 form the PDZ 1 domain; that stretch reads LVNLKKDPKH…DVTLVISQPK (87 aa). 2 disordered regions span residues 1199–1356 and 1441–1478; these read DSAM…GDTF and GQVP…TPHV. A Phosphoserine modification is found at serine 1221. Polar residues-rich tracts occupy residues 1242–1252 and 1267–1279; these read ESASLSQSQVN and PQHS…VTTK. Serine 1270 bears the Phosphoserine mark. The segment covering 1297–1315 has biased composition (basic and acidic residues); sequence GISDLIEHLDCADSDKDDS. Low complexity predominate over residues 1331 to 1341; it reads SSSLSTSNKTS. Residues 1357 to 1442 enclose the PDZ 2 domain; that stretch reads EVELAKTDGS…VVHLLLEKGQ (86 aa). Positions 1467 to 1478 are enriched in basic and acidic residues; the sequence is APEKVAKQTPHV. Residues 1491–1579 enclose the PDZ 3 domain; the sequence is EVKLFKNSSG…EVSLLLCRPA (89 aa). Residues 1602 to 1629 show a composition bias toward polar residues; that stretch reads LNSSKETSQPSSSVEQGASSDDNGVSGK. 2 disordered regions span residues 1602–1662 and 1695–1726; these read LNSS…AKMP and KLES…SDAT. The span at 1638–1655 shows a compositional bias: basic and acidic residues; the sequence is SRRESYSDHSESGEDDSV. PDZ domains lie at 1764 to 1845 and 1857 to 1942; these read LITL…GRIL and LPDI…TRDG. Disordered regions lie at residues 1991 to 2024 and 2051 to 2139; these read EAVC…DDIY and RHAT…DPPF. Residues 2012-2021 are compositionally biased toward basic and acidic residues; the sequence is ETKESNSRDD. In terms of domain architecture, Tyrosine-protein phosphatase spans 2180–2434; it reads PSKELENLQE…VFCYQVILYV (255 aa). Substrate contacts are provided by residues aspartate 2345, 2375 to 2381, and glutamine 2419; that span reads CSAGIGR. Cysteine 2375 serves as the catalytic Phosphocysteine intermediate.

This sequence belongs to the protein-tyrosine phosphatase family. Non-receptor class subfamily. Interacts (via the first PDZ domain) with PLEKHA1 and PLEKHA2. Interacts (via the second PDZ domain) with TNFRSF6 (Fas receptor) (via C-terminus). Interacts (via the second PDZ domain) with TRIP6 (via the third LIM domain and C-terminus). Interacts (via the third PDZ domain) with NGFR (via C-terminal SVP motif) and PKN2 (via C-terminus). Interacts (via the second or fourth PDZ domains) with PDLIM4 (via C-terminus only or via combined C-terminus and LIM domain, but not LIM domain only). Found in a complex with PDLIM4 and TRIP6. Interacts with PDLIM4; this interaction results in dephosphorylation of SRC 'Tyr-419' by this protein leading to its inactivation. Interacts with BRD7. Interacts with RAPGEF6. Interacts with ARHGAP29. Interacts with PIK3R2; dephosphorylates PIK3R2. Interacts with FBXL2. Interacts (via the FERM domain) with ENTR1. Found in a complex with ENTR1, PTPN13 and GIT1. In terms of tissue distribution, expressed predominantly in kidney and, to a lesser extent, in lung, heart, brain and testis.

It localises to the cytoplasm. Its subcellular location is the cytoskeleton. It is found in the nucleus. The protein resides in the cell projection. The protein localises to the lamellipodium. It carries out the reaction O-phospho-L-tyrosyl-[protein] + H2O = L-tyrosyl-[protein] + phosphate. Tyrosine phosphatase which negatively regulates FAS-induced apoptosis and NGFR-mediated pro-apoptotic signaling. May regulate phosphoinositide 3-kinase (PI3K) signaling through dephosphorylation of PIK3R2. The polypeptide is Tyrosine-protein phosphatase non-receptor type 13 (Ptpn13) (Mus musculus (Mouse)).